The primary structure comprises 22 residues: Mu-conotoxin TIIIA (22 aa).

Cystine bridges form between C4–C16, C5–C21, and C11–C22. 4-hydroxyproline occurs at positions 8 and 18. C22 bears the Cysteine amide mark.

The protein belongs to the conotoxin M superfamily. As to expression, expressed by the venom duct.

The protein localises to the secreted. In terms of biological role, mu-conotoxins block voltage-gated sodium channels (Nav). This synthetic toxin reversibly and potently blocks rNav1.4/SCN4A (IC(50) is 9 nM) and rNav1.2/SCN2A (IC(50) is 40 nM). It also moderately blocks rNav1.1/SCN1A, rNav1.3/SCN3A, and rNav1.6/SCN8A. The block of SCN1A and SCN2A is modified when beta-subunits are coexpressed with alpha subunits. Hence, blocks of channels containing beta-1 and beta-3 subunits are more potent (compared to channels without beta subunits), whereas blocks of channels containing beta-2 and beta-4 subunits are less potent (compared to channels without beta subunits). In Conus tulipa (Fish-hunting cone snail), this protein is Mu-conotoxin TIIIA.